The sequence spans 86 residues: Large ribosomal subunit protein eL43 (86 aa).

The Zn(2+) site is built by C40, C43, C58, and C61. The segment at 40-61 (CPFCRSKAVIREAYGIYRCKKC) adopts a C4-type zinc-finger fold.

The protein belongs to the eukaryotic ribosomal protein eL43 family. Putative zinc-binding subfamily. As to quaternary structure, part of the 50S ribosomal subunit. Zn(2+) serves as cofactor.

In terms of biological role, binds to the 23S rRNA. This is Large ribosomal subunit protein eL43 from Nanoarchaeum equitans (strain Kin4-M).